The chain runs to 38 residues: Small ribosomal subunit protein uS12c (38 aa).

Positions 1–26 are disordered; it reads MPTIQQLIRNARQPIENRKKSPALRG.

This sequence belongs to the universal ribosomal protein uS12 family. Part of the 30S ribosomal subunit.

The protein resides in the plastid. It is found in the chloroplast. Its function is as follows. With S4 and S5 plays an important role in translational accuracy. Located at the interface of the 30S and 50S subunits. The polypeptide is Small ribosomal subunit protein uS12c (rps12) (Pinus contorta (Shore pine)).